The following is a 401-amino-acid chain: UDP-N-acetylglucosamine--N-acetylmuramyl-(pentapeptide) pyrophosphoryl-undecaprenol N-acetylglucosamine transferase (401 aa).

The tract at residues 1–24 (MTRISVPAGQERNDGGISVPAGQE) is disordered. UDP-N-acetyl-alpha-D-glucosamine contacts are provided by residues 39-41 (TAG), asparagine 157, arginine 194, serine 228, and glutamine 324.

This sequence belongs to the glycosyltransferase 28 family. MurG subfamily.

It is found in the cell membrane. It carries out the reaction di-trans,octa-cis-undecaprenyl diphospho-N-acetyl-alpha-D-muramoyl-L-alanyl-D-glutamyl-meso-2,6-diaminopimeloyl-D-alanyl-D-alanine + UDP-N-acetyl-alpha-D-glucosamine = di-trans,octa-cis-undecaprenyl diphospho-[N-acetyl-alpha-D-glucosaminyl-(1-&gt;4)]-N-acetyl-alpha-D-muramoyl-L-alanyl-D-glutamyl-meso-2,6-diaminopimeloyl-D-alanyl-D-alanine + UDP + H(+). Its pathway is cell wall biogenesis; peptidoglycan biosynthesis. In terms of biological role, cell wall formation. Catalyzes the transfer of a GlcNAc subunit on undecaprenyl-pyrophosphoryl-MurNAc-pentapeptide (lipid intermediate I) to form undecaprenyl-pyrophosphoryl-MurNAc-(pentapeptide)GlcNAc (lipid intermediate II). The protein is UDP-N-acetylglucosamine--N-acetylmuramyl-(pentapeptide) pyrophosphoryl-undecaprenol N-acetylglucosamine transferase of Mycolicibacterium vanbaalenii (strain DSM 7251 / JCM 13017 / BCRC 16820 / KCTC 9966 / NRRL B-24157 / PYR-1) (Mycobacterium vanbaalenii).